The chain runs to 428 residues: Lupus La protein homolog A (428 aa).

One can recognise an HTH La-type RNA-binding domain in the interval 7-99 (KEQKLDSDTK…RRSPAKPLPE (93 aa)). The 93-residue stretch at 111 to 203 (KSVYIKGFPT…EERKLNKSEE (93 aa)) folds into the RRM domain. Disordered regions lie at residues 187–223 (EYHA…DAER) and 323–428 (QESF…VGDQ). Short sequence motifs (nuclear localization signal) lie at residues 196–212 (RKLN…QVKK) and 316–332 (KKIL…RKGR). A xRRM domain is found at 227-349 (EERVGSLLKF…KGRGGKGNDS (123 aa)). 2 stretches are compositionally biased toward basic residues: residues 328-343 (KRKG…KGRG) and 352-361 (RKRTQFQGKK). A compositionally biased stretch (acidic residues) spans 366–377 (SSDDEDDMEESE). The span at 406 to 428 (RSLDDKAEDGPAVKQSKTEVGDQ) shows a compositional bias: basic and acidic residues.

Phosphorylated.

It is found in the nucleus. Its function is as follows. La protein plays a role in the transcription of RNA polymerase III. It is most probably a transcription termination factor. Binds to the 3' termini of virtually all nascent polymerase III transcripts. In Xenopus laevis (African clawed frog), this protein is Lupus La protein homolog A (ssb-a).